The chain runs to 133 residues: Small ribosomal subunit protein uS8 (133 aa).

It belongs to the universal ribosomal protein uS8 family. As to quaternary structure, part of the 30S ribosomal subunit. Contacts proteins S5 and S12.

In terms of biological role, one of the primary rRNA binding proteins, it binds directly to 16S rRNA central domain where it helps coordinate assembly of the platform of the 30S subunit. In Chlamydia trachomatis serovar L2b (strain UCH-1/proctitis), this protein is Small ribosomal subunit protein uS8.